The following is an 85-amino-acid chain: U4-theraphotoxin-Hhn1h (85 aa).

Residues 1 to 22 form the signal peptide; sequence MKVTLIAILTCAAVLVLHTTAA. The propeptide occupies 23–48; it reads EELEAESQLMEVGMPDTELAAVDEER. 3 disulfides stabilise this stretch: Cys-52–Cys-66, Cys-56–Cys-77, and Cys-71–Cys-82.

This sequence belongs to the neurotoxin 12 (Hwtx-2) family. 02 (Hwtx-2) subfamily. In terms of tissue distribution, expressed by the venom gland.

It is found in the secreted. Its function is as follows. Postsynaptic neurotoxin. The sequence is that of U4-theraphotoxin-Hhn1h from Cyriopagopus hainanus (Chinese bird spider).